A 727-amino-acid polypeptide reads, in one-letter code: Glycerol-3-phosphate dehydrogenase, mitochondrial (727 aa).

A mitochondrion-targeting transit peptide spans 1 to 42 (MAFQKAVKGTILVGGGALATVLGLSQFAHYRRKQMNLAYVKA). 71–99 (DILVIGGGATGSGCALDAVTRGLKTALVE) serves as a coordination point for FAD. Tyr-601 carries the post-translational modification Phosphotyrosine. 2 EF-hand domains span residues 623-658 (SDIDRYKKRFHKFDADKKGFITIVDVQRVLESINVQ) and 659-694 (MDENTLHEILNEVDLNKNGQVELNEFLQLMSAIQKG). Asp-672, Asn-674, Asn-676, Gln-678, and Glu-683 together coordinate Ca(2+).

It belongs to the FAD-dependent glycerol-3-phosphate dehydrogenase family. FAD serves as cofactor.

The protein resides in the mitochondrion. The enzyme catalyses a quinone + sn-glycerol 3-phosphate = dihydroxyacetone phosphate + a quinol. The protein operates within polyol metabolism; glycerol degradation via glycerol kinase pathway; glycerone phosphate from sn-glycerol 3-phosphate (aerobic route): step 1/1. With respect to regulation, calcium-binding enhance the activity of the enzyme. Functionally, calcium-responsive mitochondrial glycerol-3-phosphate dehydrogenase which seems to be a key component of the pancreatic beta-cell glucose-sensing device. The chain is Glycerol-3-phosphate dehydrogenase, mitochondrial (GPD2) from Macaca fascicularis (Crab-eating macaque).